Consider the following 703-residue polypeptide: MSKQSSCAIMGKSLSFSLSRGERADLEMPTDPLVLGVKRMMFDRETSTFLLISTVFLNINEKDSHLKILCCNCVSDLRTRINLPCVLIQCRKYNSEAFKYCILLLHNLNRVERLLSFELNHALDENTKIFDGPIVFWQYLNQFFYISSAIGKVTTISLMLSSIEWIGEIENFGLGFLGLAEPSEDKCTQKLSESDYEFSNSSLCAYALKSQEMLSNGYLIPLAYSTMVTHVHVWAAEMVDHQLRTSLIALTRKNQLILFQNGIPVRACQLPFPGPRSVQILDAGKRNRFFIVSFPSKACAVSEKKFKVVAKWEQLSLVLVNDFAGVGTEQVLVVFEDSLDADQLTSFTVTDFVKIWYSTKPLDCCEDPLAEEEHENYYLVLPALEGQLDNSFIFLNKIQQHISFKDKFIAKSWKALLNAVYGKGDSLPSDEMVKLDQDGLVPFCDEGEDSVPTPEENLPDNFPEPEHIVEQTWCHVLDDDLVVGAKVTSLKESNEMTLSLIMNQGNRSSFHLMKCHSQVWLLKHMKCERIQECTEIYLYKKLRNCGALFSWEQRTASEGILTIYCRSQGVLFQCLDHLIKVLPEICSFKYLKVENEDFLVDHLSSTLEAELVTFCSVSTSAFEYVRGGYNCRIRRTDNRAMTFLGRRAKIRQSKRKVQRERILKHLNMTVNGSSYAEMTLALAEIQLKSDLIVKTLANFVIAL.

In terms of assembly, belongs to the multisubunit FA complex composed of FANCA, FANCB, FANCC, FANCE, FANCF, FANCG, FANCL/PHF9 and FANCM.

The protein localises to the nucleus. Its function is as follows. DNA repair protein required for FANCD2 ubiquitination. The polypeptide is Fanconi anemia group B protein homolog (Fancb) (Mus musculus (Mouse)).